Here is a 675-residue protein sequence, read N- to C-terminus: Methionine--tRNA ligase (675 aa).

The 'HIGH' region motif lies at 15 to 25 (PYANGSIHLGH). Residues Cys-146, Cys-149, Cys-159, and Cys-162 each contribute to the Zn(2+) site. The short motif at 332 to 336 (KMSKS) is the 'KMSKS' region element. Lys-335 lines the ATP pocket. Residues 573–675 (DFAKIDMRIA…SGAKPGHQVK (103 aa)) enclose the tRNA-binding domain.

The protein belongs to the class-I aminoacyl-tRNA synthetase family. MetG type 1 subfamily. Homodimer. Zn(2+) is required as a cofactor.

It localises to the cytoplasm. It carries out the reaction tRNA(Met) + L-methionine + ATP = L-methionyl-tRNA(Met) + AMP + diphosphate. In terms of biological role, is required not only for elongation of protein synthesis but also for the initiation of all mRNA translation through initiator tRNA(fMet) aminoacylation. This chain is Methionine--tRNA ligase, found in Proteus mirabilis (strain HI4320).